A 239-amino-acid polypeptide reads, in one-letter code: Carboxy-S-adenosyl-L-methionine synthase (239 aa).

S-adenosyl-L-methionine contacts are provided by residues Tyr-35, 64–66 (GCS), 88–89 (DN), and Arg-195.

The protein belongs to the class I-like SAM-binding methyltransferase superfamily. Cx-SAM synthase family. As to quaternary structure, homodimer.

The catalysed reaction is prephenate + S-adenosyl-L-methionine = carboxy-S-adenosyl-L-methionine + 3-phenylpyruvate + H2O. Functionally, catalyzes the conversion of S-adenosyl-L-methionine (SAM) to carboxy-S-adenosyl-L-methionine (Cx-SAM). The protein is Carboxy-S-adenosyl-L-methionine synthase of Helicobacter pylori (strain Shi470).